The chain runs to 141 residues: Large ribosomal subunit protein uL11 (141 aa).

It belongs to the universal ribosomal protein uL11 family. As to quaternary structure, part of the ribosomal stalk of the 50S ribosomal subunit. Interacts with L10 and the large rRNA to form the base of the stalk. L10 forms an elongated spine to which L12 dimers bind in a sequential fashion forming a multimeric L10(L12)X complex. Post-translationally, one or more lysine residues are methylated.

In terms of biological role, forms part of the ribosomal stalk which helps the ribosome interact with GTP-bound translation factors. The polypeptide is Large ribosomal subunit protein uL11 (Clostridium kluyveri (strain ATCC 8527 / DSM 555 / NBRC 12016 / NCIMB 10680 / K1)).